Here is a 327-residue protein sequence, read N- to C-terminus: Putative gluconeogenesis factor (327 aa).

It belongs to the gluconeogenesis factor family.

It localises to the cytoplasm. Functionally, required for morphogenesis under gluconeogenic growth conditions. This chain is Putative gluconeogenesis factor (yjiF), found in Lactococcus lactis subsp. lactis (strain IL1403) (Streptococcus lactis).